A 555-amino-acid polypeptide reads, in one-letter code: Glypican-6 (555 aa).

An N-terminal signal peptide occupies residues 1 to 23 (MPSWIGAVILPLLGLLLSLPAGA). Residues 348–357 (PALRSARSAP) show a composition bias toward low complexity. 2 disordered regions span residues 348 to 376 (PALR…PTTA) and 480 to 501 (GNDV…GSGC). Serine 529 is lipidated: GPI-anchor amidated serine. A propeptide spans 530–555 (SAAQRGHSLLSWSLTCIVLALQRLCR) (removed in mature form).

The protein belongs to the glypican family. As to expression, widely expressed. High expression in fetal kidney and lung and lower expressions in fetal liver and brain. In adult tissues, very abundant in ovary, high levels also observed in liver, kidney, small intestine and colon. Not detected in peripheral blood leukocytes. Detected in breast cancer cells (at protein level).

The protein resides in the cell membrane. Its subcellular location is the secreted. It localises to the extracellular space. Cell surface proteoglycan that bears heparan sulfate. Putative cell surface coreceptor for growth factors, extracellular matrix proteins, proteases and anti-proteases. Enhances migration and invasion of cancer cells through WNT5A signaling. This Homo sapiens (Human) protein is Glypican-6 (GPC6).